The chain runs to 1017 residues: Protein translocase subunit SecA 1 (1017 aa).

Residues Q143, 161 to 165 (GEGKT), and D661 contribute to the ATP site. A disordered region spans residues 978–999 (GLNDDDEPLPAQPITTEQKPGR). 4 residues coordinate Zn(2+): C1003, C1005, C1014, and C1015.

This sequence belongs to the SecA family. In terms of assembly, monomer and homodimer. Part of the essential Sec protein translocation apparatus which comprises SecA, SecYEG and auxiliary proteins SecDF. Other proteins may also be involved. Zn(2+) serves as cofactor.

Its subcellular location is the cell inner membrane. The protein resides in the cytoplasm. It carries out the reaction ATP + H2O + cellular proteinSide 1 = ADP + phosphate + cellular proteinSide 2.. Its function is as follows. Part of the Sec protein translocase complex. Interacts with the SecYEG preprotein conducting channel. Has a central role in coupling the hydrolysis of ATP to the transfer of proteins into and across the cell membrane, serving as an ATP-driven molecular motor driving the stepwise translocation of polypeptide chains across the membrane. The sequence is that of Protein translocase subunit SecA 1 from Chlorobium chlorochromatii (strain CaD3).